The primary structure comprises 68 residues: MAKVKMKTNRTAAKRLKITATGKVKYTKGGVSHYNTKKSSKRKRQGRKPQYVPKNLEHKVKALLPNDV.

The interval 29–68 (GGVSHYNTKKSSKRKRQGRKPQYVPKNLEHKVKALLPNDV) is disordered. Residues 35–47 (NTKKSSKRKRQGR) show a composition bias toward basic residues.

The protein belongs to the bacterial ribosomal protein bL35 family.

This Sulfurihydrogenibium sp. (strain YO3AOP1) protein is Large ribosomal subunit protein bL35.